The sequence spans 355 residues: Uroporphyrinogen decarboxylase (355 aa).

Residues arginine 36 to arginine 40, aspartate 85, tyrosine 160, serine 215, and histidine 334 contribute to the substrate site.

The protein belongs to the uroporphyrinogen decarboxylase family. In terms of assembly, homodimer.

It localises to the cytoplasm. It carries out the reaction uroporphyrinogen III + 4 H(+) = coproporphyrinogen III + 4 CO2. It functions in the pathway porphyrin-containing compound metabolism; protoporphyrin-IX biosynthesis; coproporphyrinogen-III from 5-aminolevulinate: step 4/4. In terms of biological role, catalyzes the decarboxylation of four acetate groups of uroporphyrinogen-III to yield coproporphyrinogen-III. The protein is Uroporphyrinogen decarboxylase of Rhodococcus erythropolis (strain PR4 / NBRC 100887).